We begin with the raw amino-acid sequence, 1339 residues long: DNA polymerase alpha catalytic subunit (1339 aa).

Disordered stretches follow at residues 1–90 (MSGG…SMSD) and 177–203 (NVER…GYRN). The segment covering 27–36 (DQWRSLREEV) has biased composition (basic and acidic residues). Residues 79-89 (PKQQTLAQSMS) are compositionally biased toward polar residues. Residues Cys-1179, Cys-1182, Cys-1213, Cys-1216, Cys-1233, Cys-1243, Cys-1271, and Cys-1286 each coordinate Zn(2+). A CysA-type zinc finger spans residues 1179-1216 (CTHCRLMTPINPHTRVMEVLADQERQRDRFDLYVCVSC). The short motif at 1243–1271 (CGSAAAVKAVRTQFTYYRALFDVPHAPGC) is the CysB motif element.

The protein belongs to the DNA polymerase type-B family.

The protein resides in the nucleus. It catalyses the reaction DNA(n) + a 2'-deoxyribonucleoside 5'-triphosphate = DNA(n+1) + diphosphate. Its function is as follows. Polymerase alpha in a complex with DNA primase is a replicative polymerase. This chain is DNA polymerase alpha catalytic subunit, found in Leishmania donovani.